We begin with the raw amino-acid sequence, 164 residues long: MFHILRLESTVDLSEPLKDNGIIVFQSDKLDLEPSPNLGPTGIDNTNVNLINAKGDVLLHIGIRRRENAFVFNSIPYGESRGPEERIPLEGTFGDRRDPSITIFDHPDRYQIMIDYKTVYYYKKRLEGRCEKVSYKINEGQTPPFSDVLGVTVLYFANVMPRAN.

A Galectin domain is found at serine 9–leucine 154. Residues asparagine 45, arginine 64, asparagine 73, arginine 81, glutamate 84, and asparagine 138 each contribute to the a carbohydrate site.

Homotetramer. Oligomerization is required for carbohydrate binding.

It localises to the secreted. The protein localises to the extracellular space. It is found in the extracellular matrix. The protein resides in the cell wall. In terms of biological role, binds complex carbohydrates, such as chitooligosaccharides. Does not bind lactose. May play a role in fruiting body formation. This chain is Galectin-3 (Cgl3), found in Coprinopsis cinerea (Inky cap fungus).